The primary structure comprises 322 residues: UDP-N-acetylenolpyruvoylglucosamine reductase (322 aa).

Positions 36–202 (RAGGPAQVLF…TSVLFEGVPG (167 aa)) constitute an FAD-binding PCMH-type domain. R182 is a catalytic residue. S231 acts as the Proton donor in catalysis. Residue E301 is part of the active site.

The protein belongs to the MurB family. The cofactor is FAD.

The protein localises to the cytoplasm. It catalyses the reaction UDP-N-acetyl-alpha-D-muramate + NADP(+) = UDP-N-acetyl-3-O-(1-carboxyvinyl)-alpha-D-glucosamine + NADPH + H(+). The protein operates within cell wall biogenesis; peptidoglycan biosynthesis. Cell wall formation. The protein is UDP-N-acetylenolpyruvoylglucosamine reductase of Brucella suis (strain ATCC 23445 / NCTC 10510).